Here is a 689-residue protein sequence, read N- to C-terminus: Glycine--tRNA ligase beta subunit (689 aa).

It belongs to the class-II aminoacyl-tRNA synthetase family. Tetramer of two alpha and two beta subunits.

It localises to the cytoplasm. The enzyme catalyses tRNA(Gly) + glycine + ATP = glycyl-tRNA(Gly) + AMP + diphosphate. The protein is Glycine--tRNA ligase beta subunit of Lacticaseibacillus casei (strain BL23) (Lactobacillus casei).